The primary structure comprises 397 residues: Subtilisin-like protease 3 (397 aa).

Residues Met-1–Ala-19 form the signal peptide. Positions Arg-20–Ala-116 are excised as a propeptide. In terms of domain architecture, Inhibitor I9 spans Ser-35 to Ala-116. The Peptidase S8 domain maps to Thr-126–Gln-397. Active-site charge relay system residues include Asp-158 and His-189. The N-linked (GlcNAc...) asparagine glycan is linked to Asn-250. The active-site Charge relay system is Ser-344. Asn-393 is a glycosylation site (N-linked (GlcNAc...) asparagine).

Belongs to the peptidase S8 family.

The protein resides in the secreted. In terms of biological role, secreted subtilisin-like serine protease with keratinolytic activity that contributes to pathogenicity. In Trichophyton tonsurans (Scalp ringworm fungus), this protein is Subtilisin-like protease 3 (SUB3).